We begin with the raw amino-acid sequence, 322 residues long: Deoxyhypusine hydroxylase (322 aa).

HEAT-like PBS-type repeat units follow at residues 76–102, 109–135, 234–260, and 267–293; these read LKHEVAYVLGQTGNLACAATLREVMLD, VRHEASEALGALGDAASLGALERSRRE, FKHEIAYVFGQIGNPCVVPHLQEVLKR, and VRHEAAEALGSIATDDVLPVLKRHLQD. Fe cation is bound by residues H78, E79, H111, E112, H236, E237, H269, and E270.

The protein belongs to the deoxyhypusine hydroxylase family. The cofactor is Fe(2+).

The protein localises to the cytoplasm. It is found in the nucleus. It catalyses the reaction [eIF5A protein]-deoxyhypusine + AH2 + O2 = [eIF5A protein]-hypusine + A + H2O. It participates in protein modification; eIF5A hypusination. In terms of biological role, catalyzes the hydroxylation of the N(6)-(4-aminobutyl)-L-lysine intermediate to form hypusine, an essential post-translational modification only found in mature eIF-5A factor. This is Deoxyhypusine hydroxylase from Eremothecium gossypii (strain ATCC 10895 / CBS 109.51 / FGSC 9923 / NRRL Y-1056) (Yeast).